The primary structure comprises 335 residues: Methionine import ATP-binding protein MetN 1 (335 aa).

One can recognise an ABC transporter domain in the interval 2-242 (IEFQNVHKTY…PKHPTTKRFV (241 aa)). 38–45 (GHSGAGKS) lines the ATP pocket.

This sequence belongs to the ABC transporter superfamily. Methionine importer (TC 3.A.1.24) family. The complex is composed of two ATP-binding proteins (MetN), two transmembrane proteins (MetI) and a solute-binding protein (MetQ).

It is found in the cell inner membrane. It carries out the reaction L-methionine(out) + ATP + H2O = L-methionine(in) + ADP + phosphate + H(+). It catalyses the reaction D-methionine(out) + ATP + H2O = D-methionine(in) + ADP + phosphate + H(+). In terms of biological role, part of the ABC transporter complex MetNIQ involved in methionine import. Responsible for energy coupling to the transport system. The polypeptide is Methionine import ATP-binding protein MetN 1 (Pseudomonas fluorescens (strain Pf0-1)).